The sequence spans 384 residues: N-acetylneuraminate epimerase (384 aa).

An N-terminal signal peptide occupies residues 1 to 29 (MGMQMKNFKKMMTLMALCLSVAITTSGYA). Kelch repeat units follow at residues 51–95 (VIYV…VFLN), 97–149 (ELYV…VKLN), 151–184 (TMVLITGGVNEHIFDKYFIDIEAADESEKNKVIY), 185–230 (NYFN…VMEN), 233–282 (LMLI…LAGA), 304–353 (QNYT…SYGD), and 355–384 (VFLIGGENAKGKPVSSVTSFTMRDGNLLIK). The active-site Proton acceptor is Glu239.

This sequence belongs to the NanM family. As to quaternary structure, homodimer.

Its subcellular location is the periplasm. It carries out the reaction N-acetyl-alpha-neuraminate = N-acetyl-beta-neuraminate. Its function is as follows. Converts alpha-N-acetylneuranimic acid (Neu5Ac) to the beta-anomer, accelerating the equilibrium between the alpha- and beta-anomers. Probably facilitates sialidase-negative bacteria to compete successfully for limited amounts of extracellular Neu5Ac, which is likely taken up in the beta-anomer. In addition, the rapid removal of sialic acid from solution might be advantageous to the bacterium to damp down host responses. The chain is N-acetylneuraminate epimerase from Salmonella enteritidis PT4 (strain P125109).